A 638-amino-acid chain; its full sequence is Zinc finger protein 143 (638 aa).

N-acetylmethionine is present on M1. Residue K213 forms a Glycyl lysine isopeptide (Lys-Gly) (interchain with G-Cter in SUMO2) linkage. C2H2-type zinc fingers lie at residues 237-261, 267-291, 297-321, and 327-351; these read FRCKYDGCGKLYTTAHHLKVHERSH, YQCEHSGCGKAFATGYGLKSHFRTH, YRCSEDNCTKSFKTSGDLQKHIRTH, and FKCPIEGCGRSFTTSNIRKVHIRTH. Position 352 is a phosphothreonine (T352). C2H2-type zinc fingers lie at residues 357–381, 387–411, and 417–440; these read YYCTEPGCGRAFASATNYKNHVRIH, YVCTVPGCDKRFTEYSSLYKHHVVH, and YNCNHCGKTYKQISTLAMHKRTAH. Residue K406 forms a Glycyl lysine isopeptide (Lys-Gly) (interchain with G-Cter in SUMO2) linkage.

The protein belongs to the GLI C2H2-type zinc-finger protein family. Interacts with CHD8. Forms a complex with HCFC1 and ZNF143.

It localises to the nucleus. Its function is as follows. Transcriptional activator. Activates the gene for selenocysteine tRNA (tRNAsec). Binds to the SPH motif of small nuclear RNA (snRNA) gene promoters. Participates in efficient U6 RNA polymerase III transcription via its interaction with CHD8. In complex with HCFC1 and ZNF143, regulates the expression of several genes, including AP2S1, ESCO2, OPHN1, RBL1, UBXN8 and ZNF32. This Mus musculus (Mouse) protein is Zinc finger protein 143 (Znf143).